A 186-amino-acid polypeptide reads, in one-letter code: MVLLAGTANRRELAVERAAKKEAVESLNGLFQTTSVAIVAHYSGLTVAQMQKLRQQMKQAGASVKVSKNRLAKIALEGTDVAAIGPLLKGPTVIATSSDPVAAPKVAVEFAKANEKFVILGGSMGTTVLNVDGVKALASLPSLDELRAKLVGLVQAPATKIAQVTTAPAAKLARVVQAYASKSEAA.

As to quaternary structure, part of the ribosomal stalk of the 50S ribosomal subunit. The N-terminus interacts with L11 and the large rRNA to form the base of the stalk. The C-terminus forms an elongated spine to which L12 dimers bind in a sequential fashion forming a multimeric L10(L12)X complex.

Forms part of the ribosomal stalk, playing a central role in the interaction of the ribosome with GTP-bound translation factors. The polypeptide is Large ribosomal subunit protein uL10 (Rhodopseudomonas palustris (strain ATCC BAA-98 / CGA009)).